A 486-amino-acid polypeptide reads, in one-letter code: Retrograde regulation protein 3 (486 aa).

The short motif at 27–35 (ETLDFSLVT) is the 9aaTAD 1 element. Polar residues-rich tracts occupy residues 75-94 (NNNLMGSQARSNSQTPTAST) and 101-130 (SQSSYLDDMFRTSQGGRPVTQNSISSIGQG). The disordered stretch occupies residues 75–130 (NNNLMGSQARSNSQTPTASTIYEEAESQSSYLDDMFRTSQGGRPVTQNSISSIGQG). 3 positions are modified to phosphoserine: S81, S123, and S142. Position 150 is a phosphothreonine (T150). Positions 189 to 197 (SSINSDMMT) match the 9aaTAD 2 motif. S227, S236, and S241 each carry phosphoserine. The disordered stretch occupies residues 243–274 (RHGSINTPRTRHTSISSNMTENIGPGSVPKIL). Polar residues predominate over residues 246–263 (SINTPRTRHTSISSNMTE). S269 carries the phosphoserine modification. One can recognise a bHLH domain in the interval 285–344 (RKREFHNAVERRRRELIKQKIKELGQLVPPSLLNYDDLGKQIKPNKGIILDRTVEYLQYL). The segment at 374-395 (ALSPFTNNHHASSGQNNSENSE) is disordered.

As to quaternary structure, binds DNA as a heterodimer with RTG1.

It is found in the nucleus. Transcription factor that regulates CIT2 gene expression. Binds to two identical sites oriented as inverted repeats 28 bp apart in a regulatory upstream activation sequence element (UASR) in the CIT2 promoter. The core binding site is 5'-GGTCAC-3'. The sequence is that of Retrograde regulation protein 3 (RTG3) from Saccharomyces cerevisiae (strain ATCC 204508 / S288c) (Baker's yeast).